The primary structure comprises 931 residues: Isoleucine--tRNA ligase (931 aa).

Positions 58–68 match the 'HIGH' region motif; sequence PYANGHLHCGH. L-isoleucyl-5'-AMP is bound at residue E559. A 'KMSKS' region motif is present at residues 600-604; the sequence is KLSKS. Residue K603 coordinates ATP. Residues C894, C897, C914, and C917 each coordinate Zn(2+).

Belongs to the class-I aminoacyl-tRNA synthetase family. IleS type 1 subfamily. As to quaternary structure, monomer. It depends on Zn(2+) as a cofactor.

Its subcellular location is the cytoplasm. It carries out the reaction tRNA(Ile) + L-isoleucine + ATP = L-isoleucyl-tRNA(Ile) + AMP + diphosphate. In terms of biological role, catalyzes the attachment of isoleucine to tRNA(Ile). As IleRS can inadvertently accommodate and process structurally similar amino acids such as valine, to avoid such errors it has two additional distinct tRNA(Ile)-dependent editing activities. One activity is designated as 'pretransfer' editing and involves the hydrolysis of activated Val-AMP. The other activity is designated 'posttransfer' editing and involves deacylation of mischarged Val-tRNA(Ile). The sequence is that of Isoleucine--tRNA ligase from Legionella pneumophila (strain Lens).